The sequence spans 287 residues: ATP synthase subunit a (287 aa).

The next 6 membrane-spanning stretches (helical) occupy residues 38–58 (DSMVLALLLGGLTLLILWTAA), 96–116 (FIAPLGLVVFVWVFLMNAMDM), 139–161 (VVPTADLSTTMGLALAVLGLRFW), 187–207 (PLFALILGLVNLLMQVIEYVA), 225–245 (LVFMLIALMGGAAALSLSGVL), and 259–279 (LFHILVITLQAFIFMMLALIY).

This sequence belongs to the ATPase A chain family. F-type ATPases have 2 components, CF(1) - the catalytic core - and CF(0) - the membrane proton channel. CF(1) has five subunits: alpha(3), beta(3), gamma(1), delta(1), epsilon(1). CF(0) has three main subunits: a(1), b(2) and c(9-12). The alpha and beta chains form an alternating ring which encloses part of the gamma chain. CF(1) is attached to CF(0) by a central stalk formed by the gamma and epsilon chains, while a peripheral stalk is formed by the delta and b chains.

It is found in the cell inner membrane. Functionally, key component of the proton channel; it plays a direct role in the translocation of protons across the membrane. The protein is ATP synthase subunit a of Verminephrobacter eiseniae (strain EF01-2).